We begin with the raw amino-acid sequence, 216 residues long: DegV domain-containing protein UU190 (216 aa).

In terms of domain architecture, DegV spans 1–215 (MLWKNLDELF…LNNFAILIEA (215 aa)). Ser26 contacts hexadecanoate.

May bind long-chain fatty acids, such as palmitate, and may play a role in lipid transport or fatty acid metabolism. This Ureaplasma parvum serovar 3 (strain ATCC 700970) protein is DegV domain-containing protein UU190.